The following is a 203-amino-acid chain: Glycerol-3-phosphate acyltransferase (203 aa).

6 helical membrane-spanning segments follow: residues 5–25 (IIYL…LAQI), 58–78 (TLAV…ILMA), 87–107 (ILWT…YLKF), 118–138 (GVLA…WFII), 150–170 (LGAM…IPVI), and 176–196 (IFII…RLIG).

This sequence belongs to the PlsY family. In terms of assembly, probably interacts with PlsX.

The protein localises to the cell inner membrane. The catalysed reaction is an acyl phosphate + sn-glycerol 3-phosphate = a 1-acyl-sn-glycero-3-phosphate + phosphate. It participates in lipid metabolism; phospholipid metabolism. Its function is as follows. Catalyzes the transfer of an acyl group from acyl-phosphate (acyl-PO(4)) to glycerol-3-phosphate (G3P) to form lysophosphatidic acid (LPA). This enzyme utilizes acyl-phosphate as fatty acyl donor, but not acyl-CoA or acyl-ACP. In Campylobacter lari (strain RM2100 / D67 / ATCC BAA-1060), this protein is Glycerol-3-phosphate acyltransferase.